The following is a 1352-amino-acid chain: DNA-directed RNA polymerase subunit beta (1352 aa).

This sequence belongs to the RNA polymerase beta chain family. The RNAP catalytic core consists of 2 alpha, 1 beta, 1 beta' and 1 omega subunit. When a sigma factor is associated with the core the holoenzyme is formed, which can initiate transcription.

The enzyme catalyses RNA(n) + a ribonucleoside 5'-triphosphate = RNA(n+1) + diphosphate. Functionally, DNA-dependent RNA polymerase catalyzes the transcription of DNA into RNA using the four ribonucleoside triphosphates as substrates. The sequence is that of DNA-directed RNA polymerase subunit beta from Hydrogenovibrio crunogenus (strain DSM 25203 / XCL-2) (Thiomicrospira crunogena).